Consider the following 134-residue polypeptide: Large-conductance mechanosensitive channel (134 aa).

2 helical membrane passes run 10-30 (FAMR…GAFG) and 76-96 (GAFL…FVVI).

The protein belongs to the MscL family. In terms of assembly, homopentamer.

The protein resides in the cell inner membrane. Channel that opens in response to stretch forces in the membrane lipid bilayer. May participate in the regulation of osmotic pressure changes within the cell. The polypeptide is Large-conductance mechanosensitive channel (Prosthecochloris aestuarii (strain DSM 271 / SK 413)).